The following is a 421-amino-acid chain: Medium-chain specific acyl-CoA dehydrogenase, mitochondrial (421 aa).

The transit peptide at 1 to 25 directs the protein to the mitochondrion; the sequence is MIALFRRSCGVLRSLSHFDWRSQHT. Lys-69 carries the N6-acetyllysine; alternate modification. Lys-69 carries the N6-succinyllysine; alternate modification. An N6-acetyllysine modification is found at Lys-79. 158-167 is a binding site for FAD; sequence YCVTEPVAGS. Ser-167 serves as a coordination point for octanoyl-CoA. Lys-179 carries the N6-succinyllysine modification. An FAD-binding site is contributed by 191–193; sequence WIT. Position 212 is an N6-acetyllysine; alternate (Lys-212). Lys-212 is subject to N6-succinyllysine; alternate. An octanoyl-CoA-binding site is contributed by Ser-216. An N6-acetyllysine; alternate mark is found at Lys-217, Lys-259, and Lys-271. An N6-succinyllysine; alternate mark is found at Lys-217, Lys-259, and Lys-271. Residue Asp-278 participates in octanoyl-CoA binding. Lys-279 is subject to N6-acetyllysine. Arg-281 is an octanoyl-CoA binding site. Lys-301 bears the N6-acetyllysine mark. FAD contacts are provided by residues 306–308 and 316–317; these read RKT and HQ. Octanoyl-CoA is bound by residues Arg-349 and Thr-351. Thr-351 bears the Phosphothreonine mark. 374–378 contributes to the FAD binding site; the sequence is QIFGG. Glu-401 contacts octanoyl-CoA. Catalysis depends on Glu-401, which acts as the Proton acceptor. 402–405 lines the FAD pocket; it reads GTAQ.

This sequence belongs to the acyl-CoA dehydrogenase family. Homotetramer. Interacts with the heterodimeric electron transfer flavoprotein ETF. FAD serves as cofactor. Post-translationally, acetylated. Could occur at proximity of the cofactor-binding sites and reduce the catalytic activity. Could be deacetylated by SIRT3.

The protein resides in the mitochondrion matrix. The enzyme catalyses a medium-chain 2,3-saturated fatty acyl-CoA + oxidized [electron-transfer flavoprotein] + H(+) = a medium-chain (2E)-enoyl-CoA + reduced [electron-transfer flavoprotein]. The catalysed reaction is pentanoyl-CoA + oxidized [electron-transfer flavoprotein] + H(+) = (2E)-pentenoyl-CoA + reduced [electron-transfer flavoprotein]. It carries out the reaction hexanoyl-CoA + oxidized [electron-transfer flavoprotein] + H(+) = (2E)-hexenoyl-CoA + reduced [electron-transfer flavoprotein]. It catalyses the reaction octanoyl-CoA + oxidized [electron-transfer flavoprotein] + H(+) = (2E)-octenoyl-CoA + reduced [electron-transfer flavoprotein]. The enzyme catalyses decanoyl-CoA + oxidized [electron-transfer flavoprotein] + H(+) = (2E)-decenoyl-CoA + reduced [electron-transfer flavoprotein]. The catalysed reaction is dodecanoyl-CoA + oxidized [electron-transfer flavoprotein] + H(+) = (2E)-dodecenoyl-CoA + reduced [electron-transfer flavoprotein]. It carries out the reaction tetradecanoyl-CoA + oxidized [electron-transfer flavoprotein] + H(+) = (2E)-tetradecenoyl-CoA + reduced [electron-transfer flavoprotein]. It catalyses the reaction oxidized [electron-transfer flavoprotein] + hexadecanoyl-CoA + H(+) = (2E)-hexadecenoyl-CoA + reduced [electron-transfer flavoprotein]. It participates in lipid metabolism; mitochondrial fatty acid beta-oxidation. Functionally, medium-chain specific acyl-CoA dehydrogenase is one of the acyl-CoA dehydrogenases that catalyze the first step of mitochondrial fatty acid beta-oxidation, an aerobic process breaking down fatty acids into acetyl-CoA and allowing the production of energy from fats. The first step of fatty acid beta-oxidation consists in the removal of one hydrogen from C-2 and C-3 of the straight-chain fatty acyl-CoA thioester, resulting in the formation of trans-2-enoyl-CoA. Electron transfer flavoprotein (ETF) is the electron acceptor that transfers electrons to the main mitochondrial respiratory chain via ETF-ubiquinone oxidoreductase (ETF dehydrogenase). Among the different mitochondrial acyl-CoA dehydrogenases, medium-chain specific acyl-CoA dehydrogenase acts specifically on acyl-CoAs with saturated 6 to 12 carbons long primary chains. The chain is Medium-chain specific acyl-CoA dehydrogenase, mitochondrial from Bos taurus (Bovine).